The primary structure comprises 91 residues: Putative transmembrane protein ORF91a (91 aa).

3 helical membrane-spanning segments follow: residues 17–37 (TGIS…VGLA), 40–60 (AFLG…LLFM), and 69–89 (GIGF…YIST).

It localises to the host membrane. The chain is Putative transmembrane protein ORF91a from Acidianus convivator (ABV).